The following is a 487-amino-acid chain: GTPase Der (487 aa).

2 EngA-type G domains span residues Lys-2–Lys-164 and Ile-203–Ala-374. Residues Gly-8–Ser-15, Asp-55–Ile-59, Asn-116–Asp-119, Gly-209–Ser-216, Asp-256–Ile-260, and Asn-320–Asp-323 each bind GTP. The KH-like domain maps to Tyr-375–Asn-459. The span at Asn-459 to Glu-480 shows a compositional bias: basic and acidic residues. The tract at residues Asn-459 to Val-487 is disordered.

The protein belongs to the TRAFAC class TrmE-Era-EngA-EngB-Septin-like GTPase superfamily. EngA (Der) GTPase family. In terms of assembly, associates with the 50S ribosomal subunit.

Its function is as follows. GTPase that plays an essential role in the late steps of ribosome biogenesis. This is GTPase Der from Helicobacter hepaticus (strain ATCC 51449 / 3B1).